Reading from the N-terminus, the 205-residue chain is Holliday junction branch migration complex subunit RuvA (205 aa).

Residues 1–62 (MFEYVTGYVE…EDIMALYGFK (62 aa)) are domain I. The interval 63 to 141 (TREERLLFTK…DVVPDAFVDL (79 aa)) is domain II. Residues 142-152 (FSDEERFDEKK) form a flexible linker region. A domain III region spans residues 153–205 (GSSAELDEALEALRALGYAEREVSRVVPELLKESLTTDQYIKKALSLLLNGKR).

The protein belongs to the RuvA family. As to quaternary structure, homotetramer. Forms an RuvA(8)-RuvB(12)-Holliday junction (HJ) complex. HJ DNA is sandwiched between 2 RuvA tetramers; dsDNA enters through RuvA and exits via RuvB. An RuvB hexamer assembles on each DNA strand where it exits the tetramer. Each RuvB hexamer is contacted by two RuvA subunits (via domain III) on 2 adjacent RuvB subunits; this complex drives branch migration. In the full resolvosome a probable DNA-RuvA(4)-RuvB(12)-RuvC(2) complex forms which resolves the HJ.

It localises to the cytoplasm. In terms of biological role, the RuvA-RuvB-RuvC complex processes Holliday junction (HJ) DNA during genetic recombination and DNA repair, while the RuvA-RuvB complex plays an important role in the rescue of blocked DNA replication forks via replication fork reversal (RFR). RuvA specifically binds to HJ cruciform DNA, conferring on it an open structure. The RuvB hexamer acts as an ATP-dependent pump, pulling dsDNA into and through the RuvAB complex. HJ branch migration allows RuvC to scan DNA until it finds its consensus sequence, where it cleaves and resolves the cruciform DNA. The protein is Holliday junction branch migration complex subunit RuvA of Bacillus cereus (strain AH187).